A 131-amino-acid polypeptide reads, in one-letter code: Small ribosomal subunit protein uS9 (131 aa).

This sequence belongs to the universal ribosomal protein uS9 family.

The sequence is that of Small ribosomal subunit protein uS9 from Mannheimia succiniciproducens (strain KCTC 0769BP / MBEL55E).